A 318-amino-acid polypeptide reads, in one-letter code: Cytochrome f (318 aa).

The first 32 residues, 1–32, serve as a signal peptide directing secretion; it reads MQNKNNYNWLKEWVIRSFLLLTLLTWPSVSNA. Y33, C53, C56, and H57 together coordinate heme. The chain crosses the membrane as a helical span at residues 284-304; sequence IQGLLLFFASVVLAQIFLVLK.

The protein belongs to the cytochrome f family. In terms of assembly, the 4 large subunits of the cytochrome b6-f complex are cytochrome b6, subunit IV (17 kDa polypeptide, petD), cytochrome f and the Rieske protein, while the 4 small subunits are PetG, PetL, PetM and PetN. The complex functions as a dimer. Heme serves as cofactor.

It is found in the plastid. The protein resides in the chloroplast thylakoid membrane. Functionally, component of the cytochrome b6-f complex, which mediates electron transfer between photosystem II (PSII) and photosystem I (PSI), cyclic electron flow around PSI, and state transitions. The sequence is that of Cytochrome f from Angiopteris evecta (Mule's foot fern).